Here is a 295-residue protein sequence, read N- to C-terminus: MDNKLDVFRRELVDVEGIPLFWSIAEHWSQVESFEARPDDILISTYPKSGTTWVSEILDLIYNNGDAEKCKRDAIYKRVPFMELIIPGITNGVEMLNNMPSPRIVKTHLPVQLLPSSFWKNDCKIIYVARNAKDVVVSYYYFYQMAKIHPEPGTWEEFLEKFMAGQVSFGPWYDHVKSWWEKRKEYRILYLFYEDMKENPKCEIQKILKFLEKDIPEEILNKILYHSSFSVMKENPSANYTTMMKEEMDHSVSPFMRKGISGDWKNQFTVAQYEKFEEDYVKKMEDSTLKFRSEI.

48–53 (KSGTTW) is a 3'-phosphoadenylyl sulfate binding site. Residues Phe81 and 106–108 (KTH) each bind substrate. His108 (proton acceptor) is an active-site residue. Arg130 and Ser138 together coordinate 3'-phosphoadenylyl sulfate. A substrate-binding site is contributed by Phe142. Residues Tyr193, 227–232 (SSFSVM), and 257–259 (RKG) contribute to the 3'-phosphoadenylyl sulfate site.

This sequence belongs to the sulfotransferase 1 family. In terms of tissue distribution, detected in kidney and liver. Detected in kidney collecting duct cells.

Its subcellular location is the cytoplasm. Sulfotransferase with broad substrate specificity that utilizes 3'-phospho-5'-adenylyl sulfate (PAPS) as sulfonate donor to catalyze the sulfate conjugation of catecholamines, such as dopamine, prostaglandins, leukotriene E4, drugs and xenobiotic compounds. Has sulfotransferase activity towards p-nitrophenol, 2-naphthylamine and minoxidil (in vitro). Sulfonation increases the water solubility of most compounds, and therefore their renal excretion, but it can also result in bioactivation to form active metabolites. This chain is Sulfotransferase 1 family member D1 (Sult1d1), found in Mus musculus (Mouse).